An 86-amino-acid polypeptide reads, in one-letter code: Small ribosomal subunit protein bS20 (86 aa).

Residues 1-25 (MANIKSQIKRIRTNEKARQRNKAYK) form a disordered region. Basic and acidic residues predominate over residues 12–25 (RTNEKARQRNKAYK).

Belongs to the bacterial ribosomal protein bS20 family.

Its function is as follows. Binds directly to 16S ribosomal RNA. This Beutenbergia cavernae (strain ATCC BAA-8 / DSM 12333 / CCUG 43141 / JCM 11478 / NBRC 16432 / NCIMB 13614 / HKI 0122) protein is Small ribosomal subunit protein bS20.